We begin with the raw amino-acid sequence, 429 residues long: MLVVKKTPKIKGILSAPPSKSYTHRAVICASLANGVSNLKNPLNGADCLSSAHACEMFGAEIDLNDEKWVVRGSEFKTPDNIVDIGNSGTTLRILTGISSQISDGYTVLTGDDSIRKRPMQPLLDALKQLGLNCFSTKNNGTAPIVVKSGKISNNVVEIRGDMSSQFITSLMMTLPFSENDSEIILTTPIKSEPYLNITIDVLDKFGVKIDKIEEKNKVGYKIKGNQKYLPCDYTIEGDYSSASYLVAAGVLLNSDIVIKNVFKDSKQGDREIIEIVKKMGANVEINEDNVQIMGPYKLKGIEIDVTDIPDLVPTIAVLGCFAEGKTVVYNGEHVRLKECDRLAACTTELSKMGAEIEEKKDGLIITGVHKLNGAKLKTYHDHRLVMAFTIAGMMADGETVIEGEDSVKISFPDFVDKMKSIGSNIEVI.

The 3-phosphoshikimate site is built by K20, S21, and R25. K20 provides a ligand contact to phosphoenolpyruvate. Phosphoenolpyruvate-binding residues include G89 and R118. Residues S164, S165, Q166, S192, D311, and K338 each coordinate 3-phosphoshikimate. Phosphoenolpyruvate is bound at residue Q166. D311 serves as the catalytic Proton acceptor. Phosphoenolpyruvate contacts are provided by R342 and R384.

This sequence belongs to the EPSP synthase family. In terms of assembly, monomer.

It localises to the cytoplasm. The catalysed reaction is 3-phosphoshikimate + phosphoenolpyruvate = 5-O-(1-carboxyvinyl)-3-phosphoshikimate + phosphate. Its pathway is metabolic intermediate biosynthesis; chorismate biosynthesis. Catalyzes the transfer of the enolpyruvyl moiety of phosphoenolpyruvate (PEP) to the 5-hydroxyl of shikimate-3-phosphate (S3P) to produce enolpyruvyl shikimate-3-phosphate and inorganic phosphate. The protein is 3-phosphoshikimate 1-carboxyvinyltransferase of Methanococcus maripaludis (strain C7 / ATCC BAA-1331).